The primary structure comprises 409 residues: Serine/threonine transporter SstT (409 aa).

A run of 9 helical transmembrane segments spans residues L17–A37, F49–I69, I83–F103, A142–F162, V180–A200, L218–F238, G301–V321, V331–I351, and L357–I377.

This sequence belongs to the dicarboxylate/amino acid:cation symporter (DAACS) (TC 2.A.23) family.

The protein resides in the cell inner membrane. It carries out the reaction L-serine(in) + Na(+)(in) = L-serine(out) + Na(+)(out). The enzyme catalyses L-threonine(in) + Na(+)(in) = L-threonine(out) + Na(+)(out). Its function is as follows. Involved in the import of serine and threonine into the cell, with the concomitant import of sodium (symport system). The sequence is that of Serine/threonine transporter SstT from Pseudomonas aeruginosa (strain UCBPP-PA14).